The sequence spans 1444 residues: Probable chitinase LysM18 (1444 aa).

2 LysM domains span residues 256-302 (STVQ…HFCC) and 321-369 (TTYT…IICL). The Chitin-binding type-1 domain occupies 382 to 450 (NAECGPQVPG…TNGCISNCGT (69 aa)). 4 cysteine pairs are disulfide-bonded: Cys-385–Cys-413, Cys-407–Cys-419, Cys-412–Cys-426, and Cys-444–Cys-448. Residues 461 to 831 (YRKVGFYEGF…STSWTKFTSD (371 aa)) form the GH18 domain. Glu-582 acts as the Proton donor in catalysis. 2 residues coordinate chitin: Tyr-583 and Trp-808.

Belongs to the glycosyl hydrolase 18 family. Chitinase class V subfamily.

The catalysed reaction is Random endo-hydrolysis of N-acetyl-beta-D-glucosaminide (1-&gt;4)-beta-linkages in chitin and chitodextrins.. Functionally, probable chitinase involved in the degradation of chitin, a component of the cell walls of fungi and exoskeletal elements of some animals (including worms and arthropods). Might be involved in manipulation of host defenses for successful infection. This Penicillium expansum (Blue mold rot fungus) protein is Probable chitinase LysM18.